The sequence spans 272 residues: Shikimate dehydrogenase (NADP(+)) (272 aa).

Residues 14–16 (SKS) and Thr61 each bind shikimate. Lys65 acts as the Proton acceptor in catalysis. Glu77 serves as a coordination point for NADP(+). Residues Asn86 and Asp102 each coordinate shikimate. Residues 126 to 130 (GAGGA), 149 to 154 (NRTVFR), and Met213 contribute to the NADP(+) site. Tyr215 contacts shikimate. Gly237 contributes to the NADP(+) binding site.

Belongs to the shikimate dehydrogenase family. Homodimer.

It carries out the reaction shikimate + NADP(+) = 3-dehydroshikimate + NADPH + H(+). It functions in the pathway metabolic intermediate biosynthesis; chorismate biosynthesis; chorismate from D-erythrose 4-phosphate and phosphoenolpyruvate: step 4/7. Its function is as follows. Involved in the biosynthesis of the chorismate, which leads to the biosynthesis of aromatic amino acids. Catalyzes the reversible NADPH linked reduction of 3-dehydroshikimate (DHSA) to yield shikimate (SA). The polypeptide is Shikimate dehydrogenase (NADP(+)) (Escherichia coli O127:H6 (strain E2348/69 / EPEC)).